The chain runs to 109 residues: uncharacterized protein (109 aa).

Residues 1–28 form the signal peptide; it reads MNMLAYFLYCRQLLLAVVLIEFPPRLCG.

This is an uncharacterized protein from Homo sapiens (Human).